Reading from the N-terminus, the 220-residue chain is Pyridoxine/pyridoxamine 5'-phosphate oxidase (220 aa).

Residues 13 to 16 and lysine 77 contribute to the substrate site; that span reads RVEY. FMN-binding positions include 72–77, 87–88, lysine 94, and glutamine 116; these read RTVLCK and FT. The substrate site is built by tyrosine 134, arginine 138, and serine 142. FMN is bound by residues 151-152 and tryptophan 197; that span reads QS. 203-205 serves as a coordination point for substrate; sequence RVH. An FMN-binding site is contributed by arginine 207.

The protein belongs to the pyridoxamine 5'-phosphate oxidase family. In terms of assembly, homodimer. FMN serves as cofactor.

It carries out the reaction pyridoxamine 5'-phosphate + O2 + H2O = pyridoxal 5'-phosphate + H2O2 + NH4(+). It catalyses the reaction pyridoxine 5'-phosphate + O2 = pyridoxal 5'-phosphate + H2O2. It functions in the pathway cofactor metabolism; pyridoxal 5'-phosphate salvage; pyridoxal 5'-phosphate from pyridoxamine 5'-phosphate: step 1/1. It participates in cofactor metabolism; pyridoxal 5'-phosphate salvage; pyridoxal 5'-phosphate from pyridoxine 5'-phosphate: step 1/1. Catalyzes the oxidation of either pyridoxine 5'-phosphate (PNP) or pyridoxamine 5'-phosphate (PMP) into pyridoxal 5'-phosphate (PLP). This Mycobacterium sp. (strain KMS) protein is Pyridoxine/pyridoxamine 5'-phosphate oxidase.